The primary structure comprises 426 residues: Histidine--tRNA ligase (426 aa).

Belongs to the class-II aminoacyl-tRNA synthetase family. As to quaternary structure, homodimer.

It localises to the cytoplasm. It catalyses the reaction tRNA(His) + L-histidine + ATP = L-histidyl-tRNA(His) + AMP + diphosphate + H(+). The protein is Histidine--tRNA ligase of Streptococcus pyogenes serotype M49 (strain NZ131).